A 297-amino-acid polypeptide reads, in one-letter code: Transmembrane protein 169 (297 aa).

A disordered region spans residues 1 to 85; sequence MEEPTAVEGQ…KEEEGDDFLD (85 aa). The Extracellular portion of the chain corresponds to 1-159; sequence MEEPTAVEGQ…CQMGADRGPH (159 aa). Acidic residues predominate over residues 61-85; the sequence is KTDEEPGESEGGDQPKEEEGDDFLD. Residues 160–180 traverse the membrane as a helical segment; it reads VVLWTLICLPVVFILSFVVSF. Residues 181–210 are Cytoplasmic-facing; it reads YYGTITWYNIFLVYNEERTFWHKISYCPCL. The chain crosses the membrane as a helical span at residues 211–231; it reads VLFYPVLIMAMASSLGLYAAV. Residues 232-297 are Extracellular-facing; it reads VQLSWSWEAW…PIQEVETSTV (66 aa).

The protein localises to the membrane. In Homo sapiens (Human), this protein is Transmembrane protein 169 (TMEM169).